The chain runs to 366 residues: MKEGLRVILSGGGTGGHIYPAIAIADEIKRRYPNAEILFVGAQDRMEMEKVPQAGYEIKGLWISGIDRSFSLKNFIFPFKLMSSLSKSRKIIKKFKPDIVIGTGGFGSGPLLRIAISKGIPTLIQEQNSLPGVTNRILSKNASIICAAYEKVKDVFPAEKTIITGNPVRQDLLKVDQLREEALEYFQLSKDKKTVLVLGGSLGARRINRLIENDLKKFKDEGVQLVWQIGKLYFDEYRKYDSATVRAKEFINRMDLAYAAADVIISRAGAGSVSELCVVGKPVLFIPSPNVAENHQAKNAMAVTEHDAALMITEDELTERFEPCFFSLLQDERRMNRFAANIKKLALPNATSDIVDEVEKLINNKV.

UDP-N-acetyl-alpha-D-glucosamine contacts are provided by residues 14–16 (TGG), asparagine 128, arginine 169, serine 201, isoleucine 251, and glutamine 296.

Belongs to the glycosyltransferase 28 family. MurG subfamily.

Its subcellular location is the cell inner membrane. It carries out the reaction di-trans,octa-cis-undecaprenyl diphospho-N-acetyl-alpha-D-muramoyl-L-alanyl-D-glutamyl-meso-2,6-diaminopimeloyl-D-alanyl-D-alanine + UDP-N-acetyl-alpha-D-glucosamine = di-trans,octa-cis-undecaprenyl diphospho-[N-acetyl-alpha-D-glucosaminyl-(1-&gt;4)]-N-acetyl-alpha-D-muramoyl-L-alanyl-D-glutamyl-meso-2,6-diaminopimeloyl-D-alanyl-D-alanine + UDP + H(+). It participates in cell wall biogenesis; peptidoglycan biosynthesis. Functionally, cell wall formation. Catalyzes the transfer of a GlcNAc subunit on undecaprenyl-pyrophosphoryl-MurNAc-pentapeptide (lipid intermediate I) to form undecaprenyl-pyrophosphoryl-MurNAc-(pentapeptide)GlcNAc (lipid intermediate II). The polypeptide is UDP-N-acetylglucosamine--N-acetylmuramyl-(pentapeptide) pyrophosphoryl-undecaprenol N-acetylglucosamine transferase (Christiangramia forsetii (strain DSM 17595 / CGMCC 1.15422 / KT0803) (Gramella forsetii)).